The chain runs to 514 residues: 2,3-bisphosphoglycerate-independent phosphoglycerate mutase (514 aa).

Mn(2+) contacts are provided by Asp14 and Ser64. Catalysis depends on Ser64, which acts as the Phosphoserine intermediate. Substrate is bound by residues His125, 155 to 156 (RD), Arg187, Arg193, 263 to 266 (RADR), and Lys336. Mn(2+)-binding residues include Asp403, His407, Asp444, His445, and His463.

Belongs to the BPG-independent phosphoglycerate mutase family. In terms of assembly, monomer. It depends on Mn(2+) as a cofactor.

The catalysed reaction is (2R)-2-phosphoglycerate = (2R)-3-phosphoglycerate. It participates in carbohydrate degradation; glycolysis; pyruvate from D-glyceraldehyde 3-phosphate: step 3/5. In terms of biological role, catalyzes the interconversion of 2-phosphoglycerate and 3-phosphoglycerate. The protein is 2,3-bisphosphoglycerate-independent phosphoglycerate mutase of Shewanella pealeana (strain ATCC 700345 / ANG-SQ1).